We begin with the raw amino-acid sequence, 204 residues long: Large ribosomal subunit protein uL4 (204 aa).

The segment at A52–R76 is disordered.

The protein belongs to the universal ribosomal protein uL4 family. As to quaternary structure, part of the 50S ribosomal subunit.

Functionally, one of the primary rRNA binding proteins, this protein initially binds near the 5'-end of the 23S rRNA. It is important during the early stages of 50S assembly. It makes multiple contacts with different domains of the 23S rRNA in the assembled 50S subunit and ribosome. In terms of biological role, forms part of the polypeptide exit tunnel. This Sulfurimonas denitrificans (strain ATCC 33889 / DSM 1251) (Thiomicrospira denitrificans (strain ATCC 33889 / DSM 1251)) protein is Large ribosomal subunit protein uL4.